The chain runs to 304 residues: Phosphoribosylaminoimidazole-succinocarboxamide synthase (304 aa).

It belongs to the SAICAR synthetase family.

The enzyme catalyses 5-amino-1-(5-phospho-D-ribosyl)imidazole-4-carboxylate + L-aspartate + ATP = (2S)-2-[5-amino-1-(5-phospho-beta-D-ribosyl)imidazole-4-carboxamido]succinate + ADP + phosphate + 2 H(+). Its pathway is purine metabolism; IMP biosynthesis via de novo pathway; 5-amino-1-(5-phospho-D-ribosyl)imidazole-4-carboxamide from 5-amino-1-(5-phospho-D-ribosyl)imidazole-4-carboxylate: step 1/2. The polypeptide is Phosphoribosylaminoimidazole-succinocarboxamide synthase (Streptomyces griseus subsp. griseus (strain JCM 4626 / CBS 651.72 / NBRC 13350 / KCC S-0626 / ISP 5235)).